Reading from the N-terminus, the 142-residue chain is Transcription antitermination protein NusB (142 aa).

This sequence belongs to the NusB family.

Involved in transcription antitermination. Required for transcription of ribosomal RNA (rRNA) genes. Binds specifically to the boxA antiterminator sequence of the ribosomal RNA (rrn) operons. The polypeptide is Transcription antitermination protein NusB (Borreliella burgdorferi (strain ATCC 35210 / DSM 4680 / CIP 102532 / B31) (Borrelia burgdorferi)).